Consider the following 26-residue polypeptide: DNA-binding transcriptional regulator NtrC (26 aa).

Residues 4–26 (TILVADDDAAIRTVLNQALSRAG) form the Response regulatory domain.

In terms of processing, phosphorylated and dephosphorylated by NtrB.

The protein localises to the cytoplasm. Functionally, member of the two-component regulatory system NtrB/NtrC, which controls expression of the nitrogen-regulated (ntr) genes in response to nitrogen limitation. Phosphorylated NtrC binds directly to DNA and stimulates the formation of open promoter-sigma54-RNA polymerase complexes. The protein is DNA-binding transcriptional regulator NtrC (ntrC) of Rhizobium leguminosarum bv. phaseoli.